The following is a 355-amino-acid chain: Zinc finger protein CONSTANS-LIKE 5 (355 aa).

Cys22, Cys25, Cys45, His50, Cys61, Cys64, Cys84, and His89 together coordinate Zn(2+). The segment at 22 to 60 adopts a B box-type 1; atypical zinc-finger fold; it reads CDACKSVTAAVFCRVDSAFLCIACDTRIHSFTRHERVWV. Residues 61 to 103 form a B box-type 2; atypical zinc finger; sequence CEVCEQAPAAVTCKADAAALCVSCDADIHSANPLASRHERVPV. Positions 285–327 constitute a CCT domain; the sequence is REARVLRYREKRKNRKFEKTIRYASRKAYAESRPRIKGRFAKR.

The protein belongs to the CONSTANS family.

It is found in the nucleus. The sequence is that of Zinc finger protein CONSTANS-LIKE 5 (COL5) from Arabidopsis thaliana (Mouse-ear cress).